The primary structure comprises 320 residues: Aspartate carbamoyltransferase catalytic subunit (320 aa).

Residues Arg-68 and Thr-69 each contribute to the carbamoyl phosphate site. Lys-96 serves as a coordination point for L-aspartate. Arg-118, His-148, and Gln-151 together coordinate carbamoyl phosphate. L-aspartate is bound by residues Arg-181 and Arg-236. Carbamoyl phosphate-binding residues include Gly-277 and Pro-278.

It belongs to the aspartate/ornithine carbamoyltransferase superfamily. ATCase family. In terms of assembly, heterododecamer (2C3:3R2) of six catalytic PyrB chains organized as two trimers (C3), and six regulatory PyrI chains organized as three dimers (R2).

It catalyses the reaction carbamoyl phosphate + L-aspartate = N-carbamoyl-L-aspartate + phosphate + H(+). It participates in pyrimidine metabolism; UMP biosynthesis via de novo pathway; (S)-dihydroorotate from bicarbonate: step 2/3. In terms of biological role, catalyzes the condensation of carbamoyl phosphate and aspartate to form carbamoyl aspartate and inorganic phosphate, the committed step in the de novo pyrimidine nucleotide biosynthesis pathway. This chain is Aspartate carbamoyltransferase catalytic subunit, found in Leptothrix cholodnii (strain ATCC 51168 / LMG 8142 / SP-6) (Leptothrix discophora (strain SP-6)).